An 88-amino-acid polypeptide reads, in one-letter code: MANSKSAKKRALQSEKRRQHNASRRSMLRTYVKKVIAAIRAGDHKTATEAFAAAQPIVDRMATKGLIHKNKAARHKARLNAKIKALVA.

A disordered region spans residues 1-27 (MANSKSAKKRALQSEKRRQHNASRRSM).

The protein belongs to the bacterial ribosomal protein bS20 family.

Binds directly to 16S ribosomal RNA. The protein is Small ribosomal subunit protein bS20 of Shewanella oneidensis (strain ATCC 700550 / JCM 31522 / CIP 106686 / LMG 19005 / NCIMB 14063 / MR-1).